Reading from the N-terminus, the 149-residue chain is Arginine regulator (149 aa).

It belongs to the ArgR family.

The protein localises to the cytoplasm. It functions in the pathway amino-acid degradation; L-arginine degradation via ADI pathway. Regulates the transcription of the arc operon, involved in arginine catabolism. The sequence is that of Arginine regulator (argR1) from Bacillus thuringiensis subsp. konkukian (strain 97-27).